We begin with the raw amino-acid sequence, 117 residues long: Ig heavy chain V region J558 (117 aa).

One can recognise an Ig-like domain in the interval 1–116 (EVQLQQSGPE…WGAGTTVTVS (116 aa)). An intrachain disulfide couples Cys-22 to Cys-96.

This Mus musculus (Mouse) protein is Ig heavy chain V region J558.